A 57-amino-acid chain; its full sequence is Large ribosomal subunit protein bL32 (57 aa).

The disordered stretch occupies residues methionine 1–aspartate 20. Basic residues predominate over residues arginine 7 to histidine 19.

It belongs to the bacterial ribosomal protein bL32 family.

This Ureaplasma urealyticum serovar 10 (strain ATCC 33699 / Western) protein is Large ribosomal subunit protein bL32.